Consider the following 852-residue polypeptide: Taste receptor type 1 member 3 (852 aa).

The N-terminal stretch at Met1–Gly20 is a signal peptide. Residues Ala21–Leu570 lie on the Extracellular side of the membrane. 8 N-linked (GlcNAc...) asparagine glycosylation sites follow: Asn85, Asn130, Asn264, Asn285, Asn380, Asn411, Asn432, and Asn475. The chain crosses the membrane as a helical span at residues Leu571 to Val591. The Cytoplasmic segment spans residues His592–Gly603. Residues Gly604–Phe624 traverse the membrane as a helical segment. The Extracellular portion of the chain corresponds to Pro625 to Leu639. A helical membrane pass occupies residues Ser640–Val660. Residues Glu661–Trp682 are Cytoplasmic-facing. Residues Leu683–Phe703 traverse the membrane as a helical segment. At Pro704–Ser729 the chain is on the extracellular side. The chain crosses the membrane as a helical span at residues Phe730–Leu750. At Val751–Arg762 the chain is on the cytoplasmic side. The chain crosses the membrane as a helical span at residues Gly763–Ala783. The Extracellular portion of the chain corresponds to Asn784–Pro791. The helical transmembrane segment at Ala792–Pro812 threads the bilayer. Residues Arg813–Glu852 lie on the Cytoplasmic side of the membrane. A disordered region spans residues Gly833 to Glu852. Over residues Gly839–Glu852 the composition is skewed to basic and acidic residues.

The protein belongs to the G-protein coupled receptor 3 family. TAS1R subfamily. In terms of assembly, forms homodimers or heterodimers with TAS1R1 and TAS1R2.

The protein resides in the cell membrane. Putative taste receptor. TAS1R1/TAS1R3 responds to the umami taste stimulus (the taste of monosodium glutamate). TAS1R2/TAS1R3 recognizes diverse natural and synthetic sweeteners. TAS1R3 is essential for the recognition and response to the disaccharide trehalose. Sequence differences within and between species can significantly influence the selectivity and specificity of taste responses. The polypeptide is Taste receptor type 1 member 3 (TAS1R3) (Gorilla gorilla gorilla (Western lowland gorilla)).